Here is a 670-residue protein sequence, read N- to C-terminus: Transketolase, chromosomal (670 aa).

H32 lines the substrate pocket. Residues H72 and 120-122 (GPL) each bind thiamine diphosphate. D161 contributes to the Mg(2+) binding site. The thiamine diphosphate site is built by G162 and N191. Mg(2+)-binding residues include N191 and I193. Substrate contacts are provided by H267, R364, and S391. H267 serves as a coordination point for thiamine diphosphate. E417 functions as the Proton donor in the catalytic mechanism. F443 serves as a coordination point for thiamine diphosphate. Substrate-binding residues include H467, D475, and R526.

The protein belongs to the transketolase family. Homodimer. It depends on Mg(2+) as a cofactor. Ca(2+) is required as a cofactor. Mn(2+) serves as cofactor. The cofactor is Co(2+). Requires thiamine diphosphate as cofactor.

It catalyses the reaction D-sedoheptulose 7-phosphate + D-glyceraldehyde 3-phosphate = aldehydo-D-ribose 5-phosphate + D-xylulose 5-phosphate. The protein operates within carbohydrate biosynthesis; Calvin cycle. In terms of biological role, catalyzes the transfer of a two-carbon ketol group from a ketose donor to an aldose acceptor, via a covalent intermediate with the cofactor thiamine pyrophosphate. In Cupriavidus necator (strain ATCC 17699 / DSM 428 / KCTC 22496 / NCIMB 10442 / H16 / Stanier 337) (Ralstonia eutropha), this protein is Transketolase, chromosomal (cbbTC).